A 237-amino-acid chain; its full sequence is Methylthioribulose-1-phosphate dehydratase (237 aa).

Residue Cys98 coordinates substrate. The Zn(2+) site is built by His116 and His118. Residue Glu140 is the Proton donor/acceptor of the active site. His196 lines the Zn(2+) pocket.

Belongs to the aldolase class II family. MtnB subfamily. The cofactor is Zn(2+).

It is found in the cytoplasm. It catalyses the reaction 5-(methylsulfanyl)-D-ribulose 1-phosphate = 5-methylsulfanyl-2,3-dioxopentyl phosphate + H2O. Its pathway is amino-acid biosynthesis; L-methionine biosynthesis via salvage pathway; L-methionine from S-methyl-5-thio-alpha-D-ribose 1-phosphate: step 2/6. Catalyzes the dehydration of methylthioribulose-1-phosphate (MTRu-1-P) into 2,3-diketo-5-methylthiopentyl-1-phosphate (DK-MTP-1-P). This is Methylthioribulose-1-phosphate dehydratase from Laccaria bicolor (strain S238N-H82 / ATCC MYA-4686) (Bicoloured deceiver).